Here is a 37-residue protein sequence, read N- to C-terminus: Cytochrome b6-f complex subunit 5 (37 aa).

The helical transmembrane segment at 5–25 (FLFGIVLGLIPVTLAGLFVTA) threads the bilayer.

The protein belongs to the PetG family. The 4 large subunits of the cytochrome b6-f complex are cytochrome b6, subunit IV (17 kDa polypeptide, PetD), cytochrome f and the Rieske protein, while the 4 small subunits are PetG, PetL, PetM and PetN. The complex functions as a dimer.

The protein localises to the plastid. Its subcellular location is the chloroplast thylakoid membrane. In terms of biological role, component of the cytochrome b6-f complex, which mediates electron transfer between photosystem II (PSII) and photosystem I (PSI), cyclic electron flow around PSI, and state transitions. PetG is required for either the stability or assembly of the cytochrome b6-f complex. This is Cytochrome b6-f complex subunit 5 from Daucus carota (Wild carrot).